The primary structure comprises 182 residues: UPF0301 protein CHU_1773 (182 aa).

The protein belongs to the UPF0301 (AlgH) family.

The chain is UPF0301 protein CHU_1773 from Cytophaga hutchinsonii (strain ATCC 33406 / DSM 1761 / CIP 103989 / NBRC 15051 / NCIMB 9469 / D465).